An 827-amino-acid polypeptide reads, in one-letter code: Xanthomonalisin (827 aa).

The signal sequence occupies residues 1 to 23 (MKIEKTALTVAIALAMSSLSAHA). A propeptide spans 24–237 (EDAWVSTHTQ…GPNVGTQAAA (214 aa)) (removed in mature form). The Peptidase S53 domain maps to 241-625 (AHHPQDFAAI…GKLNTYAQAN (385 aa)). Catalysis depends on charge relay system residues glutamate 312, aspartate 316, and serine 544. The Ca(2+) site is built by aspartate 585, valine 586, alanine 601, glycine 603, and aspartate 605. In terms of domain architecture, PKD spans 635–722 (TNAPPVANFS…VTVSSSGGTG (88 aa)). Residues 636 to 827 (NAPPVANFSV…GVSLKATWTN (192 aa)) constitute a propeptide, removed in mature form.

The cofactor is Ca(2+). Autocatalytically processed.

Its subcellular location is the secreted. It carries out the reaction Cleavage of casein.. Inhibited by 1,2-epoxy-3-(p-nitrophenoxy)propane (EPNP), but not by pepstatin, pepstatin Ac (S-PI) and diazoacetyl-DL-norleucine methyl ester (DAN). Not inhibited by metal ions. Pepstatin-insensitive serine-carboxyl proteinase. Shows activity on acid-denatured hemoglobin and on casein. This chain is Xanthomonalisin, found in Xanthomonas sp. (strain T-22).